The sequence spans 132 residues: RING-H2 finger protein ATL39 (132 aa).

Residues 10–30 (TIVFAFASIGFIAFYIINYYI) form a helical membrane-spanning segment. The RING-type; atypical zinc-finger motif lies at 85–127 (CVVCLNEFKDDETLRLVPPCVHVFHADCVDIWLSHSSTCPICR).

It belongs to the RING-type zinc finger family. ATL subfamily.

It localises to the membrane. It carries out the reaction S-ubiquitinyl-[E2 ubiquitin-conjugating enzyme]-L-cysteine + [acceptor protein]-L-lysine = [E2 ubiquitin-conjugating enzyme]-L-cysteine + N(6)-ubiquitinyl-[acceptor protein]-L-lysine.. It functions in the pathway protein modification; protein ubiquitination. This chain is RING-H2 finger protein ATL39 (ATL39), found in Arabidopsis thaliana (Mouse-ear cress).